The following is a 570-amino-acid chain: Proline--tRNA ligase (570 aa).

It belongs to the class-II aminoacyl-tRNA synthetase family. ProS type 1 subfamily. Homodimer.

It is found in the cytoplasm. It catalyses the reaction tRNA(Pro) + L-proline + ATP = L-prolyl-tRNA(Pro) + AMP + diphosphate. Its function is as follows. Catalyzes the attachment of proline to tRNA(Pro) in a two-step reaction: proline is first activated by ATP to form Pro-AMP and then transferred to the acceptor end of tRNA(Pro). As ProRS can inadvertently accommodate and process non-cognate amino acids such as alanine and cysteine, to avoid such errors it has two additional distinct editing activities against alanine. One activity is designated as 'pretransfer' editing and involves the tRNA(Pro)-independent hydrolysis of activated Ala-AMP. The other activity is designated 'posttransfer' editing and involves deacylation of mischarged Ala-tRNA(Pro). The misacylated Cys-tRNA(Pro) is not edited by ProRS. This is Proline--tRNA ligase from Clostridium botulinum (strain Eklund 17B / Type B).